The primary structure comprises 103 residues: Protein reprimo A (103 aa).

A helical membrane pass occupies residues I50–L70.

The protein belongs to the reprimo family.

It localises to the cytoplasm. The protein resides in the membrane. May be involved in the regulation of p53-dependent G2 arrest of the cell cycle. The sequence is that of Protein reprimo A from Danio rerio (Zebrafish).